A 228-amino-acid chain; its full sequence is Large ribosomal subunit protein bL25 (228 aa).

Residues 1-24 are disordered; it reads MATVMELKATARPKSGKGAARAER.

This sequence belongs to the bacterial ribosomal protein bL25 family. CTC subfamily. In terms of assembly, part of the 50S ribosomal subunit; part of the 5S rRNA/L5/L18/L25 subcomplex. Contacts the 5S rRNA. Binds to the 5S rRNA independently of L5 and L18.

Its function is as follows. This is one of the proteins that binds to the 5S RNA in the ribosome where it forms part of the central protuberance. The polypeptide is Large ribosomal subunit protein bL25 (Nitrobacter winogradskyi (strain ATCC 25391 / DSM 10237 / CIP 104748 / NCIMB 11846 / Nb-255)).